The following is a 159-amino-acid chain: 2-C-methyl-D-erythritol 2,4-cyclodiphosphate synthase (159 aa).

D10 and H12 together coordinate a divalent metal cation. Residues 10–12 (DVH) and 36–37 (HS) contribute to the 4-CDP-2-C-methyl-D-erythritol 2-phosphate site. H44 provides a ligand contact to a divalent metal cation. 4-CDP-2-C-methyl-D-erythritol 2-phosphate-binding positions include 58–60 (DIG), 134–137 (TTSE), F141, and R144.

It belongs to the IspF family. Homotrimer. The cofactor is a divalent metal cation.

The catalysed reaction is 4-CDP-2-C-methyl-D-erythritol 2-phosphate = 2-C-methyl-D-erythritol 2,4-cyclic diphosphate + CMP. It functions in the pathway isoprenoid biosynthesis; isopentenyl diphosphate biosynthesis via DXP pathway; isopentenyl diphosphate from 1-deoxy-D-xylulose 5-phosphate: step 4/6. Functionally, involved in the biosynthesis of isopentenyl diphosphate (IPP) and dimethylallyl diphosphate (DMAPP), two major building blocks of isoprenoid compounds. Catalyzes the conversion of 4-diphosphocytidyl-2-C-methyl-D-erythritol 2-phosphate (CDP-ME2P) to 2-C-methyl-D-erythritol 2,4-cyclodiphosphate (ME-CPP) with a corresponding release of cytidine 5-monophosphate (CMP). The chain is 2-C-methyl-D-erythritol 2,4-cyclodiphosphate synthase from Roseobacter denitrificans (strain ATCC 33942 / OCh 114) (Erythrobacter sp. (strain OCh 114)).